We begin with the raw amino-acid sequence, 419 residues long: GTPase Obg (419 aa).

The region spanning 1–156 (MRFVDYVSIE…FYLDLQLKVM (156 aa)) is the Obg domain. In terms of domain architecture, OBG-type G spans 157 to 334 (ADIGLVGKPN…LGEKQKKLEI (178 aa)). Residues 163–170 (GKPNAGKS), 188–192 (FTTLA), 209–212 (DLPG), 278–281 (NKCD), and 315–317 (NII) each bind GTP. Residues S170 and T190 each contribute to the Mg(2+) site. Residues 342–419 (IEFNLKAPFL…RIYEFEFHWN (78 aa)) form the OCT domain.

This sequence belongs to the TRAFAC class OBG-HflX-like GTPase superfamily. OBG GTPase family. Monomer. Mg(2+) serves as cofactor.

The protein resides in the cytoplasm. Functionally, an essential GTPase which binds GTP, GDP and possibly (p)ppGpp with moderate affinity, with high nucleotide exchange rates and a fairly low GTP hydrolysis rate. Plays a role in control of the cell cycle, stress response, ribosome biogenesis and in those bacteria that undergo differentiation, in morphogenesis control. The polypeptide is GTPase Obg (Mesomycoplasma hyopneumoniae (strain J / ATCC 25934 / NCTC 10110) (Mycoplasma hyopneumoniae)).